The sequence spans 95 residues: Aspartyl/glutamyl-tRNA(Asn/Gln) amidotransferase subunit C (95 aa).

The protein belongs to the GatC family. In terms of assembly, heterotrimer of A, B and C subunits.

The catalysed reaction is L-glutamyl-tRNA(Gln) + L-glutamine + ATP + H2O = L-glutaminyl-tRNA(Gln) + L-glutamate + ADP + phosphate + H(+). The enzyme catalyses L-aspartyl-tRNA(Asn) + L-glutamine + ATP + H2O = L-asparaginyl-tRNA(Asn) + L-glutamate + ADP + phosphate + 2 H(+). Functionally, allows the formation of correctly charged Asn-tRNA(Asn) or Gln-tRNA(Gln) through the transamidation of misacylated Asp-tRNA(Asn) or Glu-tRNA(Gln) in organisms which lack either or both of asparaginyl-tRNA or glutaminyl-tRNA synthetases. The reaction takes place in the presence of glutamine and ATP through an activated phospho-Asp-tRNA(Asn) or phospho-Glu-tRNA(Gln). The sequence is that of Aspartyl/glutamyl-tRNA(Asn/Gln) amidotransferase subunit C from Clostridium botulinum (strain Loch Maree / Type A3).